Consider the following 450-residue polypeptide: tRNA modification GTPase MnmE (450 aa).

(6S)-5-formyl-5,6,7,8-tetrahydrofolate contacts are provided by arginine 23, glutamate 79, and lysine 118. Residues 214–374 (GITLILVGKP…LKEHILNKVG (161 aa)) form the TrmE-type G domain. Asparagine 224 provides a ligand contact to K(+). GTP is bound by residues 224–229 (NAGKSS), 243–249 (TSIAGTT), and 268–271 (DTAG). Serine 228 provides a ligand contact to Mg(2+). K(+) is bound by residues threonine 243, isoleucine 245, and threonine 248. Mg(2+) is bound at residue threonine 249. (6S)-5-formyl-5,6,7,8-tetrahydrofolate is bound at residue lysine 450.

Belongs to the TRAFAC class TrmE-Era-EngA-EngB-Septin-like GTPase superfamily. TrmE GTPase family. As to quaternary structure, homodimer. Heterotetramer of two MnmE and two MnmG subunits. The cofactor is K(+).

The protein resides in the cytoplasm. In terms of biological role, exhibits a very high intrinsic GTPase hydrolysis rate. Involved in the addition of a carboxymethylaminomethyl (cmnm) group at the wobble position (U34) of certain tRNAs, forming tRNA-cmnm(5)s(2)U34. The protein is tRNA modification GTPase MnmE of Francisella tularensis subsp. holarctica (strain FTNF002-00 / FTA).